The following is a 192-amino-acid chain: Erythropoietin (192 aa).

The N-terminal stretch at 1–26 (MGVRECPALLLLLSLLLPPLGLPALG) is a signal peptide. Cystine bridges form between cysteine 33–cysteine 187 and cysteine 55–cysteine 59. Asparagine 50 is a glycosylation site (N-linked (GlcNAc...) asparagine). N-linked (GlcNAc...) asparagine glycans are attached at residues asparagine 64 and asparagine 109.

This sequence belongs to the EPO/TPO family.

Its subcellular location is the secreted. Its function is as follows. Hormone involved in the regulation of erythrocyte proliferation and differentiation and the maintenance of a physiological level of circulating erythrocyte mass. Binds to EPOR leading to EPOR dimerization and JAK2 activation thereby activating specific downstream effectors, including STAT1 and STAT3. The protein is Erythropoietin (EPO) of Equus caballus (Horse).